Here is a 560-residue protein sequence, read N- to C-terminus: Dihydroxy-acid dehydratase (560 aa).

Residue D78 coordinates Mg(2+). C119 lines the [2Fe-2S] cluster pocket. Residues D120 and K121 each coordinate Mg(2+). K121 bears the N6-carboxylysine mark. Residue C192 coordinates [2Fe-2S] cluster. A Mg(2+)-binding site is contributed by E446. Catalysis depends on S472, which acts as the Proton acceptor.

It belongs to the IlvD/Edd family. Homodimer. The cofactor is [2Fe-2S] cluster. It depends on Mg(2+) as a cofactor.

It catalyses the reaction (2R)-2,3-dihydroxy-3-methylbutanoate = 3-methyl-2-oxobutanoate + H2O. The catalysed reaction is (2R,3R)-2,3-dihydroxy-3-methylpentanoate = (S)-3-methyl-2-oxopentanoate + H2O. Its pathway is amino-acid biosynthesis; L-isoleucine biosynthesis; L-isoleucine from 2-oxobutanoate: step 3/4. It participates in amino-acid biosynthesis; L-valine biosynthesis; L-valine from pyruvate: step 3/4. Functionally, functions in the biosynthesis of branched-chain amino acids. Catalyzes the dehydration of (2R,3R)-2,3-dihydroxy-3-methylpentanoate (2,3-dihydroxy-3-methylvalerate) into 2-oxo-3-methylpentanoate (2-oxo-3-methylvalerate) and of (2R)-2,3-dihydroxy-3-methylbutanoate (2,3-dihydroxyisovalerate) into 2-oxo-3-methylbutanoate (2-oxoisovalerate), the penultimate precursor to L-isoleucine and L-valine, respectively. The protein is Dihydroxy-acid dehydratase of Anaeromyxobacter sp. (strain K).